The sequence spans 958 residues: Collagen alpha-1(I) chain (958 aa).

The segment at 1 to 958 (GPMGPSGPRG…PGPPGPPGPP (958 aa)) is disordered. Positions 50–64 (NGDDGEAGKPGRPGE) are enriched in basic and acidic residues. The residue at position 92 (Ser92) is a Phosphoserine. 2 stretches are compositionally biased toward low complexity: residues 100–116 (DAGP…PGEN) and 139–152 (PAGA…TGAA). The span at 154–166 (PPGPTGPAGPPGF) shows a compositional bias: pro residues. Low complexity predominate over residues 216 to 232 (APGIAGAPGFPGARGPS). Over residues 294–303 (GERGGPGSRG) the composition is skewed to gly residues. Low complexity-rich tracts occupy residues 304-335 (FPGS…PGEA), 347-373 (KGIT…QDGR), 382-401 (ARGQ…AGEP), 557-571 (SGPS…ARGA), 584-614 (AGFA…AGPA), 640-656 (SAGP…AGRV), 685-694 (ETGPAGRPGE), and 704-728 (AGEK…QGIA). Ser560 bears the Phosphoserine mark. Pro residues-rich tracts occupy residues 769 to 779 (PPGPVGPPGIA) and 808 to 823 (AGPP…PGPV). Over residues 859 to 873 (RGDKGETGEQGDRGI) the composition is skewed to basic and acidic residues. A compositionally biased stretch (low complexity) spans 892–925 (PGEQGPSGASGPAGPRGPPGSAGAPGKDGINGIP). A compositionally biased stretch (pro residues) spans 943–958 (VGPPGPPGPPGPPGPP).

Belongs to the fibrillar collagen family. In terms of assembly, trimers of one alpha 2(I) and two alpha 1(I) chains. In terms of processing, prolines at the third position of the tripeptide repeating unit (G-X-Y) are hydroxylated in some or all of the chains. As to expression, forms the fibrils of tendon, ligaments and bones. In bones, the fibrils are mineralized with calcium hydroxyapatite.

The protein resides in the secreted. It localises to the extracellular space. It is found in the extracellular matrix. In terms of biological role, type I collagen is a member of group I collagen (fibrillar forming collagen). This chain is Collagen alpha-1(I) chain, found in Macrauchenia sp.